Reading from the N-terminus, the 148-residue chain is MIIANNKKAFFDYFIEEKYEAGIELKGSEVKSIKAGKVSIKEAFVRIINDEIFIMGMSVVPWEFGSVYNPEERRVRKLLLHRKEIKKIHEKVKIKGYTIVPLDVHLSKGYVKMQIAIAKGKKTYDKRESIAKKDQERNLKREFKNNNR.

Residues E128 to R148 form a disordered region.

Belongs to the SmpB family.

The protein resides in the cytoplasm. In terms of biological role, required for rescue of stalled ribosomes mediated by trans-translation. Binds to transfer-messenger RNA (tmRNA), required for stable association of tmRNA with ribosomes. tmRNA and SmpB together mimic tRNA shape, replacing the anticodon stem-loop with SmpB. tmRNA is encoded by the ssrA gene; the 2 termini fold to resemble tRNA(Ala) and it encodes a 'tag peptide', a short internal open reading frame. During trans-translation Ala-aminoacylated tmRNA acts like a tRNA, entering the A-site of stalled ribosomes, displacing the stalled mRNA. The ribosome then switches to translate the ORF on the tmRNA; the nascent peptide is terminated with the 'tag peptide' encoded by the tmRNA and targeted for degradation. The ribosome is freed to recommence translation, which seems to be the essential function of trans-translation. The sequence is that of SsrA-binding protein from Fusobacterium nucleatum subsp. nucleatum (strain ATCC 25586 / DSM 15643 / BCRC 10681 / CIP 101130 / JCM 8532 / KCTC 2640 / LMG 13131 / VPI 4355).